The primary structure comprises 131 residues: DNA-directed RNA polymerase subunit omega (131 aa).

It belongs to the RNA polymerase subunit omega family. In terms of assembly, the RNAP catalytic core consists of 2 alpha, 1 beta, 1 beta' and 1 omega subunit. When a sigma factor is associated with the core the holoenzyme is formed, which can initiate transcription.

It carries out the reaction RNA(n) + a ribonucleoside 5'-triphosphate = RNA(n+1) + diphosphate. In terms of biological role, promotes RNA polymerase assembly. Latches the N- and C-terminal regions of the beta' subunit thereby facilitating its interaction with the beta and alpha subunits. This chain is DNA-directed RNA polymerase subunit omega, found in Chelativorans sp. (strain BNC1).